The chain runs to 311 residues: tRNA dimethylallyltransferase (311 aa).

13–20 (GPTASGKT) is an ATP binding site. 15-20 (TASGKT) lines the substrate pocket. 2 interaction with substrate tRNA regions span residues 38-41 (DSMQ) and 166-170 (QRVLR).

It belongs to the IPP transferase family. In terms of assembly, monomer. Mg(2+) is required as a cofactor.

It catalyses the reaction adenosine(37) in tRNA + dimethylallyl diphosphate = N(6)-dimethylallyladenosine(37) in tRNA + diphosphate. Catalyzes the transfer of a dimethylallyl group onto the adenine at position 37 in tRNAs that read codons beginning with uridine, leading to the formation of N6-(dimethylallyl)adenosine (i(6)A). This chain is tRNA dimethylallyltransferase, found in Staphylococcus aureus (strain bovine RF122 / ET3-1).